Consider the following 266-residue polypeptide: UPF0354 protein lmo1608 (266 aa).

The protein belongs to the UPF0354 family.

This is UPF0354 protein lmo1608 from Listeria monocytogenes serovar 1/2a (strain ATCC BAA-679 / EGD-e).